The primary structure comprises 331 residues: RNA/RNP complex-1-interacting phosphatase (331 aa).

The Tyrosine-protein phosphatase domain occupies 61–208 (FEKHLAPEEC…LRNGPIRKNW (148 aa)). Cys152 (phosphocysteine intermediate) is an active-site residue. Residue 153 to 158 (THGVNR) coordinates substrate. Arg158 (proton donor/acceptor) is an active-site residue.

Belongs to the protein-tyrosine phosphatase family. Non-receptor class dual specificity subfamily. As to quaternary structure, monomer. May interact with SFRS7 and SFRS9/SRP30C.

It is found in the nucleus. It localises to the nucleus speckle. Functionally, possesses RNA 5'-triphosphatase and diphosphatase activities, but displays a poor protein-tyrosine phosphatase activity. In addition, has phosphatase activity with ATP, ADP and O-methylfluorescein phosphate (in vitro). Binds to RNA. May participate in nuclear mRNA metabolism. This Bos taurus (Bovine) protein is RNA/RNP complex-1-interacting phosphatase (DUSP11).